A 141-amino-acid polypeptide reads, in one-letter code: Regulator of ribonuclease activity B (141 aa).

Residues 119-132 (DEDFDDEDDDEDYD) are compositionally biased toward acidic residues. A disordered region spans residues 119 to 141 (DEDFDDEDDDEDYDKDGFPIERH).

This sequence belongs to the RraB family. As to quaternary structure, interacts with the C-terminal region of Rne.

Its subcellular location is the cytoplasm. Globally modulates RNA abundance by binding to RNase E (Rne) and regulating its endonucleolytic activity. Can modulate Rne action in a substrate-dependent manner by altering the composition of the degradosome. The polypeptide is Regulator of ribonuclease activity B (Shewanella amazonensis (strain ATCC BAA-1098 / SB2B)).